The chain runs to 257 residues: Acetylglutamate kinase (257 aa).

Substrate-binding positions include 43 to 44, Arg65, and Asn157; that span reads GG. ATP is bound by residues 180 to 185 and 208 to 210; these read DVSGIL and IIT.

This sequence belongs to the acetylglutamate kinase family. ArgB subfamily. As to quaternary structure, homodimer.

The protein localises to the cytoplasm. The enzyme catalyses N-acetyl-L-glutamate + ATP = N-acetyl-L-glutamyl 5-phosphate + ADP. It participates in amino-acid biosynthesis; L-arginine biosynthesis; N(2)-acetyl-L-ornithine from L-glutamate: step 2/4. Catalyzes the ATP-dependent phosphorylation of N-acetyl-L-glutamate. The chain is Acetylglutamate kinase from Salmonella agona (strain SL483).